A 338-amino-acid chain; its full sequence is Fructose-1,6-bisphosphatase class 1 (338 aa).

Glu-91, Asp-113, Leu-115, and Asp-116 together coordinate Mg(2+). Substrate-binding positions include 116–119 (DGSS), Asn-208, and Lys-274. Mg(2+) is bound at residue Glu-280.

This sequence belongs to the FBPase class 1 family. As to quaternary structure, homotetramer. The cofactor is Mg(2+).

Its subcellular location is the cytoplasm. The enzyme catalyses beta-D-fructose 1,6-bisphosphate + H2O = beta-D-fructose 6-phosphate + phosphate. The protein operates within carbohydrate biosynthesis; gluconeogenesis. This is Fructose-1,6-bisphosphatase class 1 from Ralstonia nicotianae (strain ATCC BAA-1114 / GMI1000) (Ralstonia solanacearum).